The chain runs to 184 residues: ATP synthase subunit b, chloroplastic (184 aa).

A helical membrane pass occupies residues L27–L49.

The protein belongs to the ATPase B chain family. F-type ATPases have 2 components, F(1) - the catalytic core - and F(0) - the membrane proton channel. F(1) has five subunits: alpha(3), beta(3), gamma(1), delta(1), epsilon(1). F(0) has four main subunits: a(1), b(1), b'(1) and c(10-14). The alpha and beta chains form an alternating ring which encloses part of the gamma chain. F(1) is attached to F(0) by a central stalk formed by the gamma and epsilon chains, while a peripheral stalk is formed by the delta, b and b' chains.

Its subcellular location is the plastid. The protein localises to the chloroplast thylakoid membrane. F(1)F(0) ATP synthase produces ATP from ADP in the presence of a proton or sodium gradient. F-type ATPases consist of two structural domains, F(1) containing the extramembraneous catalytic core and F(0) containing the membrane proton channel, linked together by a central stalk and a peripheral stalk. During catalysis, ATP synthesis in the catalytic domain of F(1) is coupled via a rotary mechanism of the central stalk subunits to proton translocation. Its function is as follows. Component of the F(0) channel, it forms part of the peripheral stalk, linking F(1) to F(0). The polypeptide is ATP synthase subunit b, chloroplastic (Phalaenopsis aphrodite subsp. formosana (Moth orchid)).